A 299-amino-acid chain; its full sequence is Fibrinogen silencer-binding protein (299 aa).

K94 is covalently cross-linked (Glycyl lysine isopeptide (Lys-Gly) (interchain with G-Cter in SUMO2)). A disordered region spans residues 189-211; the sequence is EGSESPSLSSVDMRMTSSPSSVP. The segment covering 192 to 209 has biased composition (polar residues); the sequence is ESPSLSSVDMRMTSSPSS.

In terms of assembly, interacts with APBA1 (via PDZ 1 and 2 domains).

The protein resides in the nucleus. Its function is as follows. Transcriptional repressor that down-regulates the expression of the fibrinogen gamma chain. Represses transcription of GSK3B gene promoter via its interaction with APBA1. This chain is Fibrinogen silencer-binding protein (Fsbp), found in Mus musculus (Mouse).